A 148-amino-acid chain; its full sequence is uncharacterized protein (148 aa).

3 consecutive transmembrane segments (helical) span residues 25–45, 85–105, and 118–138; these read FCTV…LLTA, IVRF…LLYL, and LAAT…WVFG.

Belongs to the GtrA family.

It is found in the cell membrane. This is an uncharacterized protein from Bacillus subtilis (strain 168).